The sequence spans 776 residues: MALADKRLENLQIYKVLQCVRNKDKKQIEKLTKLGYPELINYTEPINGLSALHLASVSNDIDMVSFLLDLGAHPDVQDRMGCTPTMRAAELGHELSMEILAKAKADMTIVDNEGKGVLFYCILPTKRHYRCALIALEHGADVNNSTYEGKPIFLRACEDAHDVKDVCLTFLEKGANPNAINSSTGRTALMEASREGVVEIVRGILERGGEVNAFDNDRHHAAHFAAKGGFFDILKLLFAYNGDVGLISINGNTPLHYAAMGGFADCCKYIAQRGCDLKWKNLDHKTPRAVAKEGGFKAASKEIRRAERIANKLARPGAKNPNPLWALRLHDWSVEREAFLREAFAVLDRGDGSISKNDFVMVLEERQDYASSEQLAAIAHLHEKTRGGGVNINEFFKGTRYLNKSFVLGSYGPKKKEKGMGKKGKKGKFVLPLPICVIPEYAFPRRQDGGPPYYMIETYKNVTDSSRFNRDHPPEHPIQDDSVWYIDDSEKVFSNINIITKAGDLASLKKAFESGIPVDMKDNYYKTPLMTACASGNIDVVKFLLEKGANVNATDNFLWTPLHFACHAGQQDIVELLVESGALIDAASINNSTPLNRAIESCRLDTVKYLLDIGAKFQLENRKGHSAMDVAKAYADYRIIDLIKEKLDNLPKPAENQKLKGKTPPILKTEGPEIKKEEELLSSIYGVPTTSEGKKVQKGNVVHLNSLITSGYTKKVDITFIPRRIWSPEATTAELIRKRELRRERFTHEVDFDDFMMPFQKNITEKARALEAALKT.

ANK repeat units follow at residues 47–76 (NGLSALHLASVSNDIDMVSFLLDLGAHPDV), 184–213 (TGRTALMEASREGVVEIVRGILERGGEVNA), 217–246 (DRHHAAHFAAKGGFFDILKLLFAYNGDVGL), and 250–279 (NGNTPLHYAAMGGFADCCKYIAQRGCDLKW). The EF-hand domain maps to 335–369 (EREAFLREAFAVLDRGDGSISKNDFVMVLEERQDY). ANK repeat units follow at residues 524–553 (YYKTPLMTACASGNIDVVKFLLEKGANVNA), 557–586 (FLWTPLHFACHAGQQDIVELLVESGALIDA), 590–619 (NNSTPLNRAIESCRLDTVKYLLDIGAKFQL), and 623–652 (KGHSAMDVAKAYADYRIIDLIKEKLDNLPK).

The protein is Ankyrin repeat and EF-hand domain-containing protein 1 (ANKEF1) of Homo sapiens (Human).